Here is a 110-residue protein sequence, read N- to C-terminus: Late cornified envelope protein 2C (110 aa).

The span at 1 to 10 shows a compositional bias: low complexity; the sequence is MSCQQNQQQC. The disordered stretch occupies residues 1-23; the sequence is MSCQQNQQQCQPPPKCPPKCTPK. Residues 11–23 are compositionally biased toward pro residues; it reads QPPPKCPPKCTPK.

This sequence belongs to the LCE family. In terms of assembly, interacts with CYSRT1; the interaction is direct. In terms of tissue distribution, skin-specific. Expression was readily detected in adult trunk skin, adult arm skin, fetal skin, penal skin, vulva, esophagus and tongue. Not expressed in the cervix, rectum, lung, colon, or placenta.

Precursors of the cornified envelope of the stratum. The chain is Late cornified envelope protein 2C (LCE2C) from Homo sapiens (Human).